Consider the following 30-residue polypeptide: Cyclotide mden-G (30 aa).

Residues 1–30 (GIPCAESCVYIPCITAALGCSCKNKVCYRN) constitute a cross-link (cyclopeptide (Gly-Asn)). 3 cysteine pairs are disulfide-bonded: Cys4–Cys20, Cys8–Cys22, and Cys13–Cys27.

Belongs to the cyclotide family. Bracelet subfamily. This is a cyclic peptide.

Its function is as follows. Probably participates in a plant defense mechanism. This is Cyclotide mden-G from Melicytus dentatus (Tree violet).